A 248-amino-acid chain; its full sequence is Adenylate kinase (248 aa).

37–42 (GAGKGT) contributes to the ATP binding site. Residues 57 to 86 (SPGNLLREEMNRNSPITAQIKDYVSKGQLV) form an NMP region. AMP contacts are provided by residues Arg63, 84–86 (QLV), 111–114 (GFPR), and Gln118. The interval 149 to 181 (GRRFDPITGNTYHIIYDPPPPDIADRVVVRTDD) is LID. Position 150 (Arg150) interacts with ATP. Residues Arg178 and Arg189 each coordinate AMP.

It belongs to the adenylate kinase family. In terms of assembly, monomer.

It localises to the cytoplasm. It catalyses the reaction AMP + ATP = 2 ADP. Functionally, catalyzes the reversible transfer of the terminal phosphate group between ATP and AMP. Plays an important role in cellular energy homeostasis and in adenine nucleotide metabolism. This chain is Adenylate kinase, found in Giardia intestinalis (Giardia lamblia).